The chain runs to 508 residues: Probable cytosol aminopeptidase (508 aa).

2 residues coordinate Mn(2+): K274 and D279. K286 is an active-site residue. Positions 297, 356, and 358 each coordinate Mn(2+). The active site involves R360.

This sequence belongs to the peptidase M17 family. The cofactor is Mn(2+).

Its subcellular location is the cytoplasm. It catalyses the reaction Release of an N-terminal amino acid, Xaa-|-Yaa-, in which Xaa is preferably Leu, but may be other amino acids including Pro although not Arg or Lys, and Yaa may be Pro. Amino acid amides and methyl esters are also readily hydrolyzed, but rates on arylamides are exceedingly low.. It carries out the reaction Release of an N-terminal amino acid, preferentially leucine, but not glutamic or aspartic acids.. Its function is as follows. Presumably involved in the processing and regular turnover of intracellular proteins. Catalyzes the removal of unsubstituted N-terminal amino acids from various peptides. This chain is Probable cytosol aminopeptidase, found in Cutibacterium acnes (strain DSM 16379 / KPA171202) (Propionibacterium acnes).